Here is a 324-residue protein sequence, read N- to C-terminus: DNA-directed RNA polymerase subunit alpha (324 aa).

The tract at residues 1-228 is alpha N-terminal domain (alpha-NTD); that stretch reads MIEFQKPTIR…EHFNLFTDLS (228 aa). Positions 245–324 are alpha C-terminal domain (alpha-CTD); it reads RNKLLDMTIE…STPKEEEEEK (80 aa).

This sequence belongs to the RNA polymerase alpha chain family. In terms of assembly, homodimer. The RNAP catalytic core consists of 2 alpha, 1 beta, 1 beta' and 1 omega subunit. When a sigma factor is associated with the core the holoenzyme is formed, which can initiate transcription.

It carries out the reaction RNA(n) + a ribonucleoside 5'-triphosphate = RNA(n+1) + diphosphate. In terms of biological role, DNA-dependent RNA polymerase catalyzes the transcription of DNA into RNA using the four ribonucleoside triphosphates as substrates. This is DNA-directed RNA polymerase subunit alpha from Caldicellulosiruptor bescii (strain ATCC BAA-1888 / DSM 6725 / KCTC 15123 / Z-1320) (Anaerocellum thermophilum).